Here is a 342-residue protein sequence, read N- to C-terminus: UDP-3-O-acylglucosamine N-acyltransferase (342 aa).

His242 (proton acceptor) is an active-site residue.

This sequence belongs to the transferase hexapeptide repeat family. LpxD subfamily. As to quaternary structure, homotrimer.

The catalysed reaction is a UDP-3-O-[(3R)-3-hydroxyacyl]-alpha-D-glucosamine + a (3R)-hydroxyacyl-[ACP] = a UDP-2-N,3-O-bis[(3R)-3-hydroxyacyl]-alpha-D-glucosamine + holo-[ACP] + H(+). It participates in bacterial outer membrane biogenesis; LPS lipid A biosynthesis. Its function is as follows. Catalyzes the N-acylation of UDP-3-O-acylglucosamine using 3-hydroxyacyl-ACP as the acyl donor. Is involved in the biosynthesis of lipid A, a phosphorylated glycolipid that anchors the lipopolysaccharide to the outer membrane of the cell. The chain is UDP-3-O-acylglucosamine N-acyltransferase from Leptothrix cholodnii (strain ATCC 51168 / LMG 8142 / SP-6) (Leptothrix discophora (strain SP-6)).